A 96-amino-acid polypeptide reads, in one-letter code: Co-chaperonin GroES (96 aa).

The protein belongs to the GroES chaperonin family. Heptamer of 7 subunits arranged in a ring. Interacts with the chaperonin GroEL.

The protein localises to the cytoplasm. Its function is as follows. Together with the chaperonin GroEL, plays an essential role in assisting protein folding. The GroEL-GroES system forms a nano-cage that allows encapsulation of the non-native substrate proteins and provides a physical environment optimized to promote and accelerate protein folding. GroES binds to the apical surface of the GroEL ring, thereby capping the opening of the GroEL channel. The sequence is that of Co-chaperonin GroES from Aromatoleum aromaticum (strain DSM 19018 / LMG 30748 / EbN1) (Azoarcus sp. (strain EbN1)).